We begin with the raw amino-acid sequence, 631 residues long: Nucleoside triphosphatase I (631 aa).

The 163-residue stretch at 42–204 (FLGLDSMHSL…TMLVNLLRPG (163 aa)) folds into the Helicase ATP-binding domain. 55–62 (HETGVGKT) is an ATP binding site. The DEXH box signature appears at 141-144 (DECH). The Helicase C-terminal domain maps to 367–532 (KFIDVCLGIL…EFVQLFRVFK (166 aa)). A binding to the cap-specific mRNA (nucleoside-2'-O-)-methyltransferase region spans residues 457 to 524 (DIFILDMTWN…EIIQSKSKEF (68 aa)).

The protein belongs to the helicase family. NPH I subfamily. As to quaternary structure, monomer. Interacts (via C-terminus) with RAP94/OPG109 (via N-terminus). Interacts with the cap-specific mRNA (nucleoside-2'-O-)-methyltransferase OPG102.

It localises to the virion. It catalyses the reaction a ribonucleoside 5'-triphosphate + H2O = a ribonucleoside 5'-diphosphate + phosphate + H(+). Its function is as follows. DNA-dependent ATPase that acts as a 5' to 3' translocase on single-stranded DNA and thereby plays a role in transcription termination of viral early genes. Uses forward translocation in concert with the viral RNA polymerase RAP94/OPG109 subunit and the capping enzyme/VTF to catalyze release of UUUUUNU-containing nascent RNA from the elongation complex. In addition, acts as a positive elongation factor to assist transcription through problematic sequences. This Vaccinia virus (strain Copenhagen) (VACV) protein is Nucleoside triphosphatase I (OPG123).